Consider the following 184-residue polypeptide: Ribosome-recycling factor (184 aa).

Belongs to the RRF family.

It localises to the cytoplasm. Functionally, responsible for the release of ribosomes from messenger RNA at the termination of protein biosynthesis. May increase the efficiency of translation by recycling ribosomes from one round of translation to another. In Thermoanaerobacter pseudethanolicus (strain ATCC 33223 / 39E) (Clostridium thermohydrosulfuricum), this protein is Ribosome-recycling factor.